A 619-amino-acid chain; its full sequence is ESX-2 secretion system protein EccA2 (619 aa).

G373–T380 lines the ATP pocket.

The protein belongs to the CbxX/CfxQ family. As to quaternary structure, part of the ESX-2 / type VII secretion system (T7SS), which is composed of cytosolic and membrane components.

The protein resides in the cytoplasm. In terms of biological role, part of an ESX-2 / type VII specialized secretion system (T7SS), which exports several proteins. May have ATPase activity and might provide energy for the export of ESX-2 substrates. The chain is ESX-2 secretion system protein EccA2 from Mycobacterium bovis (strain ATCC BAA-935 / AF2122/97).